Consider the following 395-residue polypeptide: Tryptophan--tRNA ligase (395 aa).

Residues 8 to 10 (RPT) and 16 to 17 (GH) contribute to the ATP site. The 'HIGH' region motif lies at 9–17 (PTGKLHLGH). An insert region spans residues 117 to 179 (RLTDLEKEFK…EIEPEILKRL (63 aa)). Residue D204 participates in L-tryptophan binding. Residues 216 to 218 (GED), I254, and 261 to 265 (KMSKS) each bind ATP. The 'KMSKS' region signature appears at 261–265 (KMSKS).

It belongs to the class-I aminoacyl-tRNA synthetase family. In terms of assembly, homodimer.

It is found in the cytoplasm. The enzyme catalyses tRNA(Trp) + L-tryptophan + ATP = L-tryptophyl-tRNA(Trp) + AMP + diphosphate + H(+). In terms of biological role, catalyzes the attachment of tryptophan to tRNA(Trp). This Aquifex aeolicus (strain VF5) protein is Tryptophan--tRNA ligase.